The sequence spans 288 residues: Pantothenate synthetase (288 aa).

ATP is bound at residue 30–37; the sequence is MGFLHEGH. Histidine 37 serves as the catalytic Proton donor. Glutamine 61 lines the (R)-pantoate pocket. Glutamine 61 contributes to the beta-alanine binding site. An ATP-binding site is contributed by 147–150; it reads GMKD. Glutamine 153 contributes to the (R)-pantoate binding site. 184-187 is a binding site for ATP; that stretch reads KSSR.

It belongs to the pantothenate synthetase family. In terms of assembly, homodimer.

It is found in the cytoplasm. It carries out the reaction (R)-pantoate + beta-alanine + ATP = (R)-pantothenate + AMP + diphosphate + H(+). Its pathway is cofactor biosynthesis; (R)-pantothenate biosynthesis; (R)-pantothenate from (R)-pantoate and beta-alanine: step 1/1. Catalyzes the condensation of pantoate with beta-alanine in an ATP-dependent reaction via a pantoyl-adenylate intermediate. This Bacillus licheniformis (strain ATCC 14580 / DSM 13 / JCM 2505 / CCUG 7422 / NBRC 12200 / NCIMB 9375 / NCTC 10341 / NRRL NRS-1264 / Gibson 46) protein is Pantothenate synthetase.